Here is a 435-residue protein sequence, read N- to C-terminus: Adenylosuccinate lyase (435 aa).

N(6)-(1,2-dicarboxyethyl)-AMP contacts are provided by residues 4–5, 73–75, and 99–100; these read RY, RHD, and TS. The Proton donor/acceptor role is filled by H147. Q218 serves as a coordination point for N(6)-(1,2-dicarboxyethyl)-AMP. Residue S268 is the Proton donor/acceptor of the active site. N(6)-(1,2-dicarboxyethyl)-AMP-binding positions include S269, 274–276, N282, and 313–317; these read KKN and SAERV.

Belongs to the lyase 1 family. Adenylosuccinate lyase subfamily. In terms of assembly, homotetramer. Residues from neighboring subunits contribute catalytic and substrate-binding residues to each active site.

The enzyme catalyses N(6)-(1,2-dicarboxyethyl)-AMP = fumarate + AMP. It carries out the reaction (2S)-2-[5-amino-1-(5-phospho-beta-D-ribosyl)imidazole-4-carboxamido]succinate = 5-amino-1-(5-phospho-beta-D-ribosyl)imidazole-4-carboxamide + fumarate. It functions in the pathway purine metabolism; AMP biosynthesis via de novo pathway; AMP from IMP: step 2/2. It participates in purine metabolism; IMP biosynthesis via de novo pathway; 5-amino-1-(5-phospho-D-ribosyl)imidazole-4-carboxamide from 5-amino-1-(5-phospho-D-ribosyl)imidazole-4-carboxylate: step 2/2. In terms of biological role, catalyzes two reactions in de novo purine nucleotide biosynthesis. Catalyzes the breakdown of 5-aminoimidazole- (N-succinylocarboxamide) ribotide (SAICAR or 2-[5-amino-1-(5-phospho-beta-D-ribosyl)imidazole-4-carboxamido]succinate) to 5-aminoimidazole-4-carboxamide ribotide (AICAR or 5-amino-1-(5-phospho-beta-D-ribosyl)imidazole-4-carboxamide) and fumarate, and of adenylosuccinate (ADS or N(6)-(1,2-dicarboxyethyl)-AMP) to adenosine monophosphate (AMP) and fumarate. The polypeptide is Adenylosuccinate lyase (purB) (Deinococcus radiodurans (strain ATCC 13939 / DSM 20539 / JCM 16871 / CCUG 27074 / LMG 4051 / NBRC 15346 / NCIMB 9279 / VKM B-1422 / R1)).